The primary structure comprises 362 residues: 3-isopropylmalate dehydrogenase (362 aa).

75-88 serves as a coordination point for NAD(+); sequence GPKWANLPPTEQPE. Residues R96, R106, R135, and D224 each coordinate substrate. Residues D224, D248, and D252 each contribute to the Mg(2+) site. 282 to 294 provides a ligand contact to NAD(+); the sequence is GSAPDIAGLGVAN.

It belongs to the isocitrate and isopropylmalate dehydrogenases family. LeuB type 1 subfamily. Homodimer. It depends on Mg(2+) as a cofactor. Requires Mn(2+) as cofactor.

It localises to the cytoplasm. It catalyses the reaction (2R,3S)-3-isopropylmalate + NAD(+) = 4-methyl-2-oxopentanoate + CO2 + NADH. The protein operates within amino-acid biosynthesis; L-leucine biosynthesis; L-leucine from 3-methyl-2-oxobutanoate: step 3/4. In terms of biological role, catalyzes the oxidation of 3-carboxy-2-hydroxy-4-methylpentanoate (3-isopropylmalate) to 3-carboxy-4-methyl-2-oxopentanoate. The product decarboxylates to 4-methyl-2 oxopentanoate. The sequence is that of 3-isopropylmalate dehydrogenase from Colwellia psychrerythraea (strain 34H / ATCC BAA-681) (Vibrio psychroerythus).